Here is a 338-residue protein sequence, read N- to C-terminus: Solute carrier family 35 member G6 (338 aa).

A disordered region spans residues 1–25; it reads MAGSHPYLNPPDSTHPSPPSAPPSL. 9 consecutive transmembrane segments (helical) span residues 40–60, 67–87, 105–125, 160–180, 190–210, 221–241, 255–275, 281–301, and 310–330; these read LLVA…LSHM, LPSL…ALLL, YFYA…VQVV, CGLL…LWTL, ALGY…LLVY, TVAF…LFVL, CVGA…YAVT, LVCA…YYML, and IVGA…NLSC. In terms of domain architecture, EamA 1 spans 49-174; sequence LPAGFVGPLS…SILGLIIIVG (126 aa). In terms of domain architecture, EamA 2 spans 272 to 325; the sequence is YAVTKAHPALVCAVLHSEVVVALILQYYMLHETVAPSDIVGAGVVLGSIAIITA.

Belongs to the SLC35G solute transporter family. In terms of tissue distribution, expressed in placenta and testis.

It is found in the membrane. The polypeptide is Solute carrier family 35 member G6 (SLC35G6) (Homo sapiens (Human)).